The following is a 457-amino-acid chain: SH3 domain-binding protein 5 (457 aa).

Residues Met-1–Glu-12 are compositionally biased toward basic and acidic residues. The interval Met-1–Leu-68 is disordered. A compositionally biased stretch (acidic residues) spans Glu-25–Val-43. Residues Met-33–Ala-267 are sufficient for interaction with RAB11A and for guanine nucleotide exchange activity. Positions Asp-44–Lys-53 are enriched in basic and acidic residues. Coiled-coil stretches lie at residues Arg-46–Lys-92, Asp-99–Glu-147, Ala-156–Lys-202, and Tyr-213–Asp-257. Residues Asn-308–Glu-319 are compositionally biased toward acidic residues. The interval Asn-308 to Gly-347 is disordered. A compositionally biased stretch (low complexity) spans Ser-322–Ser-334. The residue at position 353 (Ser-353) is a Phosphoserine; by MAPK12 and MAPK9. The tract at residues Ser-371–Gln-427 is disordered. Phosphoserine occurs at positions 377 and 378. Residues Glu-382–Asp-398 are compositionally biased toward basic and acidic residues. Low complexity predominate over residues Leu-406–Gln-427. At Ser-420 the chain carries Phosphoserine. At Ser-423 the chain carries Phosphoserine; by MAPK12.

Belongs to the SH3BP5 family. Interacts with BTK. Interacts with all isoforms of MAPK8, MAPK9, MAPK10 and MAPK12. Interacts with GDP-bound and nucleotide-free forms of RAB11A.

The protein localises to the cytoplasmic vesicle membrane. The protein resides in the mitochondrion. Its function is as follows. Functions as a guanine nucleotide exchange factor (GEF) with specificity for RAB11A and RAB25. Inhibits the auto- and transphosphorylation activity of BTK. Plays a negative regulatory role in BTK-related cytoplasmic signaling in B-cells. May be involved in BCR-induced apoptotic cell death. This Rattus norvegicus (Rat) protein is SH3 domain-binding protein 5 (Sh3bp5).